The primary structure comprises 651 residues: Peptide-N(4)-(N-acetyl-beta-glucosaminyl)asparagine amidase (651 aa).

An N-acetylalanine modification is found at A2. A PUB domain is found at 30–91; sequence EASKLLLTYA…EGETHLIFPK (62 aa). Residues C247, C250, C280, and C283 each coordinate Zn(2+). Catalysis depends on C306, which acts as the Nucleophile. Catalysis depends on residues H333 and D350. The PAW domain maps to 451–651; it reads ELGGRVSGSL…LEIIITFNDL (201 aa).

This sequence belongs to the transglutaminase-like superfamily. PNGase family. As to quaternary structure, component of a complex required to couple retrotranslocation, ubiquitination and deglycosylation composed of NGLY1, SAKS1, AMFR, VCP and RAD23B. Interacts with the proteasome components RAD23B and PSMC1. Interacts with directly with VCP. Interacts with DERL1, bringing it close to the endoplasmic reticulum membrane. Interacts with SAKS1. Zn(2+) serves as cofactor. In terms of tissue distribution, ubiquitously expressed with highest level in testis.

The protein resides in the cytoplasm. The catalysed reaction is Hydrolysis of an N(4)-(acetyl-beta-D-glucosaminyl)asparagine residue in which the glucosamine residue may be further glycosylated, to yield a (substituted) N-acetyl-beta-D-glucosaminylamine and a peptide containing an aspartate residue.. With respect to regulation, inhibited by Z-VAD-fmk, a well-known caspase inhibitor, which inhibits enzyme activity through covalent binding of the carbohydrate to the single Cys-306 residue. Functionally, specifically deglycosylates the denatured form of N-linked glycoproteins in the cytoplasm and assists their proteasome-mediated degradation. Cleaves the beta-aspartyl-glucosamine (GlcNAc) of the glycan and the amide side chain of Asn, converting Asn to Asp. Prefers proteins containing high-mannose over those bearing complex type oligosaccharides. Can recognize misfolded proteins in the endoplasmic reticulum that are exported to the cytosol to be destroyed and deglycosylate them, while it has no activity toward native proteins. Deglycosylation is a prerequisite for subsequent proteasome-mediated degradation of some, but not all, misfolded glycoproteins. This chain is Peptide-N(4)-(N-acetyl-beta-glucosaminyl)asparagine amidase (Ngly1), found in Mus musculus (Mouse).